Reading from the N-terminus, the 1447-residue chain is DNA-directed RNA polymerase subunit beta' (1447 aa).

Zn(2+)-binding residues include C70, C72, C85, and C88. Positions 460, 462, and 464 each coordinate Mg(2+). C890, C964, C971, and C974 together coordinate Zn(2+).

Belongs to the RNA polymerase beta' chain family. The RNAP catalytic core consists of 2 alpha, 1 beta, 1 beta' and 1 omega subunit. When a sigma factor is associated with the core the holoenzyme is formed, which can initiate transcription. Requires Mg(2+) as cofactor. The cofactor is Zn(2+).

It catalyses the reaction RNA(n) + a ribonucleoside 5'-triphosphate = RNA(n+1) + diphosphate. Functionally, DNA-dependent RNA polymerase catalyzes the transcription of DNA into RNA using the four ribonucleoside triphosphates as substrates. The protein is DNA-directed RNA polymerase subunit beta' of Desulfosudis oleivorans (strain DSM 6200 / JCM 39069 / Hxd3) (Desulfococcus oleovorans).